The primary structure comprises 628 residues: Biosynthetic arginine decarboxylase (628 aa).

K99 carries the post-translational modification N6-(pyridoxal phosphate)lysine. 279 to 289 (VDVGGGLGIDY) serves as a coordination point for substrate.

Belongs to the Orn/Lys/Arg decarboxylase class-II family. SpeA subfamily. It depends on Mg(2+) as a cofactor. Requires pyridoxal 5'-phosphate as cofactor.

It catalyses the reaction L-arginine + H(+) = agmatine + CO2. In terms of biological role, catalyzes the biosynthesis of agmatine from arginine. The sequence is that of Biosynthetic arginine decarboxylase from Xanthomonas campestris pv. campestris (strain ATCC 33913 / DSM 3586 / NCPPB 528 / LMG 568 / P 25).